A 125-amino-acid polypeptide reads, in one-letter code: MAIAKEDILEAVGAMSVLELNELVKAFEEKFGVSAAAVAVAGPAGAGGGAAAAEEQTEFTVILSEAGANKVSVIKAVRELTGLGLKEAKDLVDGAPKPVKEAVPKAAAEEAKKKLEEAGAKAEIK.

It belongs to the bacterial ribosomal protein bL12 family. As to quaternary structure, homodimer. Part of the ribosomal stalk of the 50S ribosomal subunit. Forms a multimeric L10(L12)X complex, where L10 forms an elongated spine to which 2 to 4 L12 dimers bind in a sequential fashion. Binds GTP-bound translation factors.

Forms part of the ribosomal stalk which helps the ribosome interact with GTP-bound translation factors. Is thus essential for accurate translation. The sequence is that of Large ribosomal subunit protein bL12 from Paraburkholderia phymatum (strain DSM 17167 / CIP 108236 / LMG 21445 / STM815) (Burkholderia phymatum).